Consider the following 327-residue polypeptide: Cytochrome c biogenesis protein CcsA (327 aa).

The next 8 helical transmembrane spans lie at 13-33, 46-66, 73-93, 101-121, 145-165, 233-253, 262-282, and 294-314; these read ISFS…LVNL, GIII…IYSG, LYES…VSYF, LNAI…SGLL, MILG…LLVI, IISL…VWAN, WDPK…YLHI, and AIVA…VNLL.

The protein belongs to the CcmF/CycK/Ccl1/NrfE/CcsA family. May interact with Ccs1.

It is found in the plastid. It localises to the chloroplast thylakoid membrane. Required during biogenesis of c-type cytochromes (cytochrome c6 and cytochrome f) at the step of heme attachment. In Lobularia maritima (Sweet alyssum), this protein is Cytochrome c biogenesis protein CcsA.